We begin with the raw amino-acid sequence, 178 residues long: Ribosome maturation factor RimM (178 aa).

One can recognise a PRC barrel domain in the interval 101–178 (TDEYYWYQLV…VMRVEWDADF (78 aa)).

Belongs to the RimM family. Binds ribosomal protein uS19.

Its subcellular location is the cytoplasm. In terms of biological role, an accessory protein needed during the final step in the assembly of 30S ribosomal subunit, possibly for assembly of the head region. Essential for efficient processing of 16S rRNA. May be needed both before and after RbfA during the maturation of 16S rRNA. It has affinity for free ribosomal 30S subunits but not for 70S ribosomes. The polypeptide is Ribosome maturation factor RimM (Pseudomonas entomophila (strain L48)).